Consider the following 47-residue polypeptide: Delta-halcutoxin-Hcg1a (47 aa).

3 disulfides stabilise this stretch: C3-C43, C5-C33, and C26-C44.

Belongs to the sea anemone sodium channel inhibitory toxin family. Type II subfamily.

The protein localises to the secreted. Its subcellular location is the nematocyst. Functionally, is potently lethal to crabs, although it showed neither lethal activity in mice nor hemolytic activity. May bind to voltage-gated sodium channels (Nav), thereby delaying their inactivation during signal transduction. The sequence is that of Delta-halcutoxin-Hcg1a from Isohalcurias carlgreni (Sea anemone).